The sequence spans 24 residues: Humanin-like 13 (24 aa).

It belongs to the humanin family.

It localises to the secreted. The protein resides in the cytoplasm. Its function is as follows. Plays a role as a neuroprotective and antiapoptotic factor. This chain is Humanin-like 13, found in Homo sapiens (Human).